The primary structure comprises 1028 residues: Receptor-type guanylate cyclase gcy-13 (1028 aa).

N-linked (GlcNAc...) asparagine glycans are attached at residues Asn58, Asn156, Asn324, Asn337, Asn377, and Asn394. Residues 438–458 (IVVIVAVIIVLCCAAAAIAAF) traverse the membrane as a helical segment. The Cytoplasmic portion of the chain corresponds to 459 to 1028 (LVIKARRDEE…WLLGMKEESA (570 aa)). The disordered stretch occupies residues 491–511 (ESHHSSRSLQSNSTTTTGTTG). The span at 497 to 511 (RSLQSNSTTTTGTTG) shows a compositional bias: low complexity. Residues 499–770 (LQSNSTTTTG…DMVNKLMKNM (272 aa)) enclose the Protein kinase domain. The stretch at 786–817 (SVLEKHASSLEDEVQERMKELVEEKKKSDILL) forms a coiled coil. The 131-residue stretch at 844–974 (TIFFSDVVGF…DTVNTASRME (131 aa)) folds into the Guanylate cyclase domain.

The protein belongs to the adenylyl cyclase class-4/guanylyl cyclase family. Expressed bilaterally in RIM interneurons.

It is found in the cell membrane. The catalysed reaction is GTP = 3',5'-cyclic GMP + diphosphate. In terms of biological role, guanylate cyclase involved in the production of the second messenger cGMP. This Caenorhabditis elegans protein is Receptor-type guanylate cyclase gcy-13.